The sequence spans 216 residues: Protein-L-isoaspartate O-methyltransferase (216 aa).

The active site involves S64.

The protein belongs to the methyltransferase superfamily. L-isoaspartyl/D-aspartyl protein methyltransferase family.

Its subcellular location is the cytoplasm. The catalysed reaction is [protein]-L-isoaspartate + S-adenosyl-L-methionine = [protein]-L-isoaspartate alpha-methyl ester + S-adenosyl-L-homocysteine. In terms of biological role, catalyzes the methyl esterification of L-isoaspartyl residues in peptides and proteins that result from spontaneous decomposition of normal L-aspartyl and L-asparaginyl residues. It plays a role in the repair and/or degradation of damaged proteins. This Paracoccus denitrificans (strain Pd 1222) protein is Protein-L-isoaspartate O-methyltransferase.